The chain runs to 360 residues: S-adenosylmethionine-dependent nucleotide dehydratase RSAD2 (360 aa).

The interval 44-71 (KGQPRVRGEPKETQETHEDPGSAQPTTP) is disordered. Residues 49-63 (VRGEPKETQETHEDP) are compositionally biased toward basic and acidic residues. One can recognise a Radical SAM core domain in the interval 68–288 (PTTPVSVNYH…LQRHKDVSCL (221 aa)). Residues cysteine 82, cysteine 86, and cysteine 89 each coordinate [4Fe-4S] cluster. Lysine 196 carries the N6-acetyllysine modification. Lysine 205 participates in a covalent cross-link: Glycyl lysine isopeptide (Lys-Gly) (interchain with G-Cter in ubiquitin).

The protein belongs to the radical SAM superfamily. RSAD2 family. As to quaternary structure, homodimer. Interacts with IRAK1 and TRAF6. Interacts with FPPS. Interacts with HADHB. Interacts (via C-terminus) with VAPA/VAP33 (via C-terminus). [4Fe-4S] cluster serves as cofactor. Acetylated by HAT1. HAT1-mediated acetylation of Lys-196 in turn recruits UBE4A that stimulates RSAD2 polyubiquitination leading to proteasomal degradation. Post-translationally, 'Lys-6'-linked polyubiquitination at Lys-205 leads to RSAD2 protein degradation. In neonatal rat tibia, specifically localized in cells of the periosteum, in osteoblasts lining endosteal and peristeal bone surfaces, to articular surfaces of cartilage and in perichondral cells but not in chondrocytes (at protein level). Expressed predominantly in bone marrow and spleen.

The protein resides in the endoplasmic reticulum membrane. It is found in the golgi apparatus. It localises to the endoplasmic reticulum. Its subcellular location is the lipid droplet. The protein localises to the mitochondrion. The protein resides in the mitochondrion inner membrane. It is found in the mitochondrion outer membrane. The catalysed reaction is CTP + AH2 + S-adenosyl-L-methionine = 3'-deoxy-3',4'-didehydro-CTP + 5'-deoxyadenosine + L-methionine + A + H2O + H(+). With respect to regulation, IRAK1 and TRAF6 synergistically activate RSAD2 increasing its activity with CTP as substrate about 10-fold. In terms of biological role, interferon-inducible antiviral protein which plays a major role in the cell antiviral state induced by type I and type II interferon. Catalyzes the conversion of cytidine triphosphate (CTP) to 3'-deoxy-3',4'-didehydro-CTP (ddhCTP) via a SAM-dependent radical mechanism. In turn, ddhCTP acts as a chain terminator for the RNA-dependent RNA polymerases from multiple viruses and directly inhibits viral replication. Therefore, inhibits a wide range of DNA and RNA viruses. Also promotes TLR7 and TLR9-dependent production of IFN-beta production in plasmacytoid dendritic cells (pDCs) by facilitating 'Lys-63'-linked ubiquitination of IRAK1 by TRAF6. Plays a role in CD4+ T-cells activation and differentiation. Facilitates T-cell receptor (TCR)-mediated GATA3 activation and optimal T-helper 2 (Th2) cytokine production by modulating NFKB1 and JUNB activities. Can inhibit secretion of soluble proteins. The polypeptide is S-adenosylmethionine-dependent nucleotide dehydratase RSAD2 (Rattus norvegicus (Rat)).